Here is a 329-residue protein sequence, read N- to C-terminus: Transcription factor TGA2.3 (329 aa).

Residues 1 to 48 (MADMSPRTDTSTDDTDDNHMLEPGQLALAAASDSDRSKDKHEDQKTLR) form a disordered region. The span at 33–46 (DSDRSKDKHEDQKT) shows a compositional bias: basic and acidic residues. A bZIP domain is found at 43–87 (DQKTLRRLAQNREAARKSRLRKKAYVQQLENSRLKLTQLEQELQR). Positions 45-65 (KTLRRLAQNREAARKSRLRKK) are basic motif. Positions 71-85 (LENSRLKLTQLEQEL) are leucine-zipper. One can recognise a DOG1 domain in the interval 110 to 326 (ALAFDMEYAR…RALSSLWLAR (217 aa)).

It belongs to the bZIP family. Interacts with NPR1/NH1 and NPR3/NH3.

It is found in the nucleus. Functionally, transcriptional regulator involved in defense response. In Oryza sativa subsp. japonica (Rice), this protein is Transcription factor TGA2.3.